A 449-amino-acid chain; its full sequence is Gamma conglutin 1 (449 aa).

The signal sequence occupies residues 1-33 (MARNMAHILHILVISLSYSFLFVSSSSQDSQSL). The 370-residue stretch at 60–429 (HWANIHKRTP…DLERSRVGFN (370 aa)) folds into the Peptidase A1 domain. 5 disulfide bridges follow: Cys88-Cys178, Cys102-Cys115, Cys107-Cys133, Cys118-Cys128, and Cys350-Cys391. N-linked (GlcNAc...) asparagine glycosylation occurs at Asn130.

It belongs to the peptidase A1 family. As to quaternary structure, two-subunit monomeric unit made of alpha and beta subunits coupled by disulfide bonds (at pH 4.5 and under non-reducing conditions). Can also form oligomers including dimer, tetramer and cyclic hexamer (trimer of dimers) (at pH &gt; 5.5). Component of globulins complexes which accumulate in seeds. Interacts with flavonoids (e.g. apigenin glucosides) present in globulins complexes. Forms a static complex with vitexin. In terms of processing, undergoes very complex post-translational maturation; the proteolytic processing leading to the formation of two alpha and beta subunits is incomplete, leaving a certain amount of the protein in an uncut form. Post-translationally, glycosylated on alpha chain. In terms of tissue distribution, expressed in developing cotyledons and in the embryonic axis of germinating seeds. Accumulates in seeds, especially in the protein bodies of developing cotyledonary cells (at protein level). Also detected, at low levels, in plumules and radicles.

The protein localises to the secreted. The protein resides in the extracellular space. Its function is as follows. Sulfur-rich seed storage protein that remains undegraded at germination. This Lupinus angustifolius (Narrow-leaved blue lupine) protein is Gamma conglutin 1.